Here is a 181-residue protein sequence, read N- to C-terminus: MAQDSNNLIWIDMEMTGLNPGTDRIIEVALVVTDAQLNTLAEAPVLVVHQPDDILNGMDKWNQSTHGKSGLIDKVKTSILSEAEVESRMLAFLELHVPAGTSPMCGNSICQDRRFLARSMPKLESYFHYRNLDVSTLKELAKRWKPEITQGFNKQGKHEALADIYDSIEELKYYRQHLFNI.

The region spanning 8-171 (LIWIDMEMTG…ADIYDSIEEL (164 aa)) is the Exonuclease domain. Residue tyrosine 129 is part of the active site.

This sequence belongs to the oligoribonuclease family.

It localises to the cytoplasm. 3'-to-5' exoribonuclease specific for small oligoribonucleotides. This chain is Oligoribonuclease, found in Nitrosomonas europaea (strain ATCC 19718 / CIP 103999 / KCTC 2705 / NBRC 14298).